Consider the following 460-residue polypeptide: Methylenetetrahydrofolate--tRNA-(uracil-5-)-methyltransferase TrmFO (460 aa).

An FAD-binding site is contributed by 15 to 20 (GAGLAG).

The protein belongs to the MnmG family. TrmFO subfamily. Requires FAD as cofactor.

Its subcellular location is the cytoplasm. The enzyme catalyses uridine(54) in tRNA + (6R)-5,10-methylene-5,6,7,8-tetrahydrofolate + NADH + H(+) = 5-methyluridine(54) in tRNA + (6S)-5,6,7,8-tetrahydrofolate + NAD(+). It catalyses the reaction uridine(54) in tRNA + (6R)-5,10-methylene-5,6,7,8-tetrahydrofolate + NADPH + H(+) = 5-methyluridine(54) in tRNA + (6S)-5,6,7,8-tetrahydrofolate + NADP(+). Its function is as follows. Catalyzes the folate-dependent formation of 5-methyl-uridine at position 54 (M-5-U54) in all tRNAs. The polypeptide is Methylenetetrahydrofolate--tRNA-(uracil-5-)-methyltransferase TrmFO (Synechococcus sp. (strain CC9902)).